The sequence spans 622 residues: Neuronal acetylcholine receptor subunit alpha-4 (622 aa).

An N-terminal signal peptide occupies residues M1 to G23. Residues H24–L237 are Extracellular-facing. Residue N52 is glycosylated (N-linked (GlcNAc...) asparagine). Residues V71 and E73 each contribute to the Ca(2+) site. Residue N102 is glycosylated (N-linked (GlcNAc...) asparagine). Cystine bridges form between C156-C170 and C220-C221. Residues P238–L262 traverse the membrane as a helical segment. C266 carries S-palmitoyl cysteine lipidation. A run of 2 helical transmembrane segments spans residues I270–T288 and Y304–V325. Residues H326–R595 are Cytoplasmic-facing. Disordered stretches follow at residues W380–G477 and Q497–E516. Low complexity predominate over residues T390–S407. Composition is skewed to polar residues over residues S450 to N472 and Q497 to S508. A helical membrane pass occupies residues I596 to L614.

The protein belongs to the ligand-gated ion channel (TC 1.A.9) family. Acetylcholine receptor (TC 1.A.9.1) subfamily. Alpha-4/CHRNA4 sub-subfamily. In terms of assembly, neuronal AChR is composed of two different types of subunits: alpha and beta. CHRNA4 forms heteropentameric neuronal acetylcholine receptors with CHRNB2 and CHRNB4, as well as CHRNA5 and CHRNB3 as accesory subunits. Found in two major stoichiometric forms, LS (low agonist sensitivity): (CHRNA4)3:(CHRNB2)2 and HS (high agonist sensitivity): (CHRNA4)2:(CHRNB2)3, the two stoichiometric forms differ in their unitary conductance, calcium permeability, ACh sensitivity and potentiation by divalent cation. Cells produce predominantly an (CHRNA4)3:(CHRNB2)2 nAChR. The (CHRNA4)2:(CHRNB2)3 expression is selectively up-regulated by nicotine and has lower single channel conductance and calcium permeability. In the striatum, also forms CHRNA4:CHRNA6:CHRNB2 complexes. Also found in the stoichiometric form: (CHRNA4:CHRNB2)2:CHRNB3.

It is found in the synaptic cell membrane. The protein localises to the cell membrane. The catalysed reaction is Ca(2+)(in) = Ca(2+)(out). It carries out the reaction K(+)(in) = K(+)(out). It catalyses the reaction Na(+)(in) = Na(+)(out). With respect to regulation, activated by a myriad of ligands such as acetylcholine, cytisine, nicotine, choline and epibatidine. Channel potentiation by calcium is stoichiometry-selective, CHRNA4:CHRNB2 nACh receptor is achieved by calcium association with topographically distinct sites framed by anionic residues within the CHRNA4 subunit and between the CHRNA4 and CHRNB2 subunits. nAChR activity is inhibited by the antagonist alpha-conotoxins BuIA, PnIA, GID and MII, small disulfide-constrained peptides from cone snails. Component of neuronal acetylcholine receptors (nAChRs) that function as pentameric, ligand-gated cation channels with high calcium permeability among other activities. nAChRs are excitatory neurotrasnmitter receptors formed by a collection of nAChR subunits known to mediate synaptic transmission in the nervous system and the neuromuscular junction. Each nAchR subunit confers differential attributes to channel properties, including activation, deactivation and desensitization kinetics, pH sensitivity, cation permeability, and binding to allosteric modulators. CHRNA4 forms heteropentameric neuronal acetylcholine receptors with CHRNB2 and CHRNB4, as well as CHRNA5 and CHRNB3 as accesory subunits. Is the most abundant nAChR subtype expressed in the central nervous system. Found in two major stoichiometric forms,(CHRNA4)3:(CHRNB2)2 and (CHRNA4)2:(CHRNB2)3, the two stoichiometric forms differ in their unitary conductance, calcium permeability, ACh sensitivity and potentiation by divalent cation. Involved in the modulation of calcium-dependent signaling pathways, influences the release of neurotransmitters, including dopamine, glutamate and GABA. This is Neuronal acetylcholine receptor subunit alpha-4 (CHRNA4) from Gallus gallus (Chicken).